A 528-amino-acid polypeptide reads, in one-letter code: Peptide chain release factor 3 (528 aa).

The tr-type G domain occupies aspartate 10 to glutamine 278. Residues serine 19–threonine 26, aspartate 87–histidine 91, and asparagine 141–aspartate 144 contribute to the GTP site.

It belongs to the TRAFAC class translation factor GTPase superfamily. Classic translation factor GTPase family. PrfC subfamily.

The protein localises to the cytoplasm. Functionally, increases the formation of ribosomal termination complexes and stimulates activities of RF-1 and RF-2. It binds guanine nucleotides and has strong preference for UGA stop codons. It may interact directly with the ribosome. The stimulation of RF-1 and RF-2 is significantly reduced by GTP and GDP, but not by GMP. The chain is Peptide chain release factor 3 from Oleidesulfovibrio alaskensis (strain ATCC BAA-1058 / DSM 17464 / G20) (Desulfovibrio alaskensis).